The sequence spans 590 residues: Mitochondrial distribution and morphology protein 34 (590 aa).

In terms of domain architecture, SMP-LTD spans 1 to 225 (MSFIFNRETF…LPSVIFNMSQ (225 aa)). Residues 393-405 (RRKIKMRSRKPSK) are compositionally biased toward basic residues. The interval 393 to 456 (RRKIKMRSRK…APEGGPNAED (64 aa)) is disordered. Over residues 413–427 (PAQNDSGTSSCSNVA) the composition is skewed to polar residues.

The protein belongs to the MDM34 family. Component of the ER-mitochondria encounter structure (ERMES) or MDM complex, composed of MMM1, MDM10, MDM12 and MDM34.

Its subcellular location is the mitochondrion outer membrane. Its function is as follows. Component of the ERMES/MDM complex, which serves as a molecular tether to connect the endoplasmic reticulum (ER) and mitochondria. Components of this complex are involved in the control of mitochondrial shape and protein biogenesis, and function in nonvesicular lipid trafficking between the ER and mitochondria. MDM34 is required for the interaction of the ER-resident membrane protein MMM1 and the outer mitochondrial membrane-resident beta-barrel protein MDM10. The polypeptide is Mitochondrial distribution and morphology protein 34 (Eremothecium gossypii (strain ATCC 10895 / CBS 109.51 / FGSC 9923 / NRRL Y-1056) (Yeast)).